The sequence spans 181 residues: Adenine phosphoribosyltransferase 2 (181 aa).

Serine 2 bears the N-acetylserine mark.

The protein belongs to the purine/pyrimidine phosphoribosyltransferase family.

Its subcellular location is the cytoplasm. The catalysed reaction is AMP + diphosphate = 5-phospho-alpha-D-ribose 1-diphosphate + adenine. It participates in purine metabolism; AMP biosynthesis via salvage pathway; AMP from adenine: step 1/1. Functionally, catalyzes a salvage reaction resulting in the formation of AMP, that is energically less costly than de novo synthesis. May lack catalytic activity. The protein is Adenine phosphoribosyltransferase 2 (APT2) of Saccharomyces cerevisiae (strain ATCC 204508 / S288c) (Baker's yeast).